The sequence spans 163 residues: Cytochrome c-type biogenesis protein CcmE (163 aa).

At 1 to 8 (MNPRRKKR) the chain is on the cytoplasmic side. Residues 9-29 (LTIILAISAGLAAVIGLVLYA) traverse the membrane as a helical; Signal-anchor for type II membrane protein segment. Residues 30 to 163 (LSQNIDLFYT…TEAQLKGAKQ (134 aa)) lie on the Periplasmic side of the membrane. Heme-binding residues include His-131 and Tyr-135.

Belongs to the CcmE/CycJ family.

It is found in the cell inner membrane. Functionally, heme chaperone required for the biogenesis of c-type cytochromes. Transiently binds heme delivered by CcmC and transfers the heme to apo-cytochromes in a process facilitated by CcmF and CcmH. The chain is Cytochrome c-type biogenesis protein CcmE from Aeromonas salmonicida (strain A449).